Consider the following 182-residue polypeptide: Adenine phosphoribosyltransferase (182 aa).

It belongs to the purine/pyrimidine phosphoribosyltransferase family. In terms of assembly, homodimer.

Its subcellular location is the cytoplasm. It catalyses the reaction AMP + diphosphate = 5-phospho-alpha-D-ribose 1-diphosphate + adenine. Its pathway is purine metabolism; AMP biosynthesis via salvage pathway; AMP from adenine: step 1/1. Functionally, catalyzes a salvage reaction resulting in the formation of AMP, that is energically less costly than de novo synthesis. This is Adenine phosphoribosyltransferase from Pseudomonas syringae pv. tomato (strain ATCC BAA-871 / DC3000).